The sequence spans 79 residues: D-alanyl carrier protein (79 aa).

The Carrier domain occupies 2 to 79 (AEFKEQVLDI…MVIKKLEEIR (78 aa)). An O-(pantetheine 4'-phosphoryl)serine modification is found at Ser-37.

The protein belongs to the DltC family. In terms of processing, 4'-phosphopantetheine is transferred from CoA to a specific serine of apo-DCP.

It is found in the cytoplasm. The protein operates within cell wall biogenesis; lipoteichoic acid biosynthesis. In terms of biological role, carrier protein involved in the D-alanylation of lipoteichoic acid (LTA). The loading of thioester-linked D-alanine onto DltC is catalyzed by D-alanine--D-alanyl carrier protein ligase DltA. The DltC-carried D-alanyl group is further transferred to cell membrane phosphatidylglycerol (PG) by forming an ester bond, probably catalyzed by DltD. D-alanylation of LTA plays an important role in modulating the properties of the cell wall in Gram-positive bacteria, influencing the net charge of the cell wall. The protein is D-alanyl carrier protein of Bacillus mycoides (strain KBAB4) (Bacillus weihenstephanensis).